The primary structure comprises 641 residues: Bifunctional protein glk (641 aa).

Positions 1–340 (MSTGAQTKAA…QLSNRTGGAS (340 aa)) are glucokinase. 23–28 (ADVGGT) serves as a coordination point for ATP. One can recognise an HTH rpiR-type domain in the interval 341-417 (SAVFERIRQM…LKLATGLTGT (77 aa)). The interval 341–641 (SAVFERIRQM…SHGAAPAAKD (301 aa)) is putative HTH-type transcriptional regulator. Residues 377-396 (IVDIARKADVSQPTVIRFCR) constitute a DNA-binding region (H-T-H motif). An SIS domain is found at 461-600 (AIDILNNARR…AVGVAIRRAA (140 aa)). A helical membrane pass occupies residues 576–596 (SMISRILHLVMIDILAVGVAI).

In the N-terminal section; belongs to the bacterial glucokinase family.

It localises to the membrane. The enzyme catalyses D-glucose + ATP = D-glucose 6-phosphate + ADP + H(+). In Burkholderia pseudomallei (strain 1710b), this protein is Bifunctional protein glk (glk).